The chain runs to 269 residues: GTP cyclohydrolase FolE2 (269 aa).

Belongs to the GTP cyclohydrolase IV family.

It carries out the reaction GTP + H2O = 7,8-dihydroneopterin 3'-triphosphate + formate + H(+). The protein operates within cofactor biosynthesis; 7,8-dihydroneopterin triphosphate biosynthesis; 7,8-dihydroneopterin triphosphate from GTP: step 1/1. In terms of biological role, converts GTP to 7,8-dihydroneopterin triphosphate. In Azoarcus sp. (strain BH72), this protein is GTP cyclohydrolase FolE2.